The chain runs to 943 residues: Leucine--tRNA ligase (943 aa).

Positions Pro-40–His-51 match the 'HIGH' region motif. Positions Lys-717–Ser-721 match the 'KMSKS' region motif. Lys-720 serves as a coordination point for ATP.

The protein belongs to the class-I aminoacyl-tRNA synthetase family.

Its subcellular location is the cytoplasm. The enzyme catalyses tRNA(Leu) + L-leucine + ATP = L-leucyl-tRNA(Leu) + AMP + diphosphate. This is Leucine--tRNA ligase from Bacteroides fragilis (strain YCH46).